Here is a 519-residue protein sequence, read N- to C-terminus: Cytochrome P450 4A22 (519 aa).

A propeptide spanning residues 1-4 (MSVS) is cleaved from the precursor. E321 is a heme binding site. S440 bears the Phosphoserine mark. C457 serves as a coordination point for heme.

The protein belongs to the cytochrome P450 family.

The protein resides in the endoplasmic reticulum membrane. It is found in the microsome membrane. It catalyses the reaction an omega-methyl-long-chain fatty acid + reduced [NADPH--hemoprotein reductase] + O2 = an omega-hydroxy-long-chain fatty acid + oxidized [NADPH--hemoprotein reductase] + H2O + H(+). In terms of biological role, catalyzes the omega- and (omega-1)-hydroxylation of various fatty acids such as laurate and palmitate. Shows no activity towards arachidonic acid and prostaglandin A1. Lacks functional activity in the kidney and does not contribute to renal 20-hydroxyeicosatetraenoic acid (20-HETE) biosynthesis. The sequence is that of Cytochrome P450 4A22 (CYP4A22) from Homo sapiens (Human).